A 717-amino-acid polypeptide reads, in one-letter code: Translation initiation factor eIF2B subunit epsilon (717 aa).

A compositionally biased stretch (low complexity) spans 1–14; that stretch reads MAATAAVPGAAAGR. Residues 1 to 37 form a disordered region; the sequence is MAATAAVPGAAAGRASKRGGGGSGGGGTQGAEEEPPP. Arg18 carries the omega-N-methylarginine modification. Residues 18 to 29 show a composition bias toward gly residues; it reads RGGGGSGGGGTQ. Ser23 bears the Phosphoserine mark. Glycyl lysine isopeptide (Lys-Gly) (interchain with G-Cter in ubiquitin) cross-links involve residues Lys57 and Lys99. Ser126 carries the post-translational modification Phosphoserine. Glycyl lysine isopeptide (Lys-Gly) (interchain with G-Cter in ubiquitin) cross-links involve residues Lys137 and Lys213. Residue Thr318 is modified to Phosphothreonine. Residues 442 to 479 form a disordered region; sequence GSVISLHPPDAEEDEDDGQFSDDSGADQEKEKVKLKGY. Ser446, Ser462, and Ser465 each carry phosphoserine. Over residues 452–467 the composition is skewed to acidic residues; that stretch reads AEEDEDDGQFSDDSGA. A Glycyl lysine isopeptide (Lys-Gly) (interchain with G-Cter in ubiquitin) cross-link involves residue Lys501. Positions 517-538 are disordered; that stretch reads TEEESETESEGSVDPEELDSRA. Positions 519–533 are enriched in acidic residues; sequence EESETESEGSVDPEE. Residues Ser528 and Ser536 each carry the phosphoserine modification. The W2 domain maps to 539 to 716; sequence GSPQLDDIRV…REAEEESSED (178 aa). The residue at position 540 (Ser540) is a Phosphoserine; by DYRK2. The residue at position 713 (Ser713) is a Phosphoserine.

It belongs to the eIF-2B gamma/epsilon subunits family. In terms of assembly, component of the translation initiation factor 2B (eIF2B) complex which is a heterodecamer of two sets of five different subunits: alpha, beta, gamma, delta and epsilon. Subunits alpha, beta and delta comprise a regulatory subcomplex and subunits epsilon and gamma comprise a catalytic subcomplex. Within the complex, the hexameric regulatory complex resides at the center, with the two heterodimeric catalytic subcomplexes bound on opposite sides. Phosphorylated at Ser-540 by DYRK2; this is required for subsequent phosphorylation by GSK3B. Phosphorylated on serine and threonine residues by GSK3B; phosphorylation inhibits its function. Post-translationally, polyubiquitinated, probably by NEDD4.

The protein resides in the cytoplasm. It localises to the cytosol. Its activity is regulated as follows. Activated by the chemical integrated stress response (ISR) inhibitor ISRIB which stimulates guanine nucleotide exchange factor activity for both phosphorylated and unphosphorylated eIF2. Acts as a component of the translation initiation factor 2B (eIF2B) complex, which catalyzes the exchange of GDP for GTP on eukaryotic initiation factor 2 (eIF2) gamma subunit. Its guanine nucleotide exchange factor activity is repressed when bound to eIF2 complex phosphorylated on the alpha subunit, thereby limiting the amount of methionyl-initiator methionine tRNA available to the ribosome and consequently global translation is repressed. In Mus musculus (Mouse), this protein is Translation initiation factor eIF2B subunit epsilon (Eif2b5).